Consider the following 357-residue polypeptide: Elongation factor Ts (357 aa).

Positions 82-85 are involved in Mg(2+) ion dislocation from EF-Tu; sequence TDFV.

This sequence belongs to the EF-Ts family.

It is found in the cytoplasm. In terms of biological role, associates with the EF-Tu.GDP complex and induces the exchange of GDP to GTP. It remains bound to the aminoacyl-tRNA.EF-Tu.GTP complex up to the GTP hydrolysis stage on the ribosome. The sequence is that of Elongation factor Ts from Campylobacter jejuni subsp. jejuni serotype O:23/36 (strain 81-176).